We begin with the raw amino-acid sequence, 1352 residues long: Ubiquitin carboxyl-terminal hydrolase 31 (1352 aa).

The span at 1–16 (MSKVTAPGSGPPAAAS) shows a compositional bias: low complexity. Disordered regions lie at residues 1-62 (MSKV…RSVG) and 79-119 (SSEG…PPAC). Gly residues predominate over residues 32 to 43 (RAGGGGAGGPGA). Residues 44–62 (SGPAAPSSPSSPSSARSVG) show a composition bias toward low complexity. Pro residues predominate over residues 95–117 (PPGPAAAPTPPPCPPPPASPAPP). The USP domain occupies 128 to 765 (AGLRNHGNTC…TAYILFYQRR (638 aa)). Residue Cys137 is the Nucleophile of the active site. The disordered stretch occupies residues 162-185 (RAGRPEPSPDPEQPAGRGAQGQGE). His723 serves as the catalytic Proton acceptor. Disordered regions lie at residues 812–835 (LASLSESVEMTGERSEDDGGFSTR), 919–939 (SSSYQEPSDSHSRREHKAVGR), and 951–1352 (DESD…QKPQ). Residues 958 to 970 (LNSSVVDTQSKHS) are compositionally biased toward polar residues. Composition is skewed to low complexity over residues 992 to 1001 (VDQSDSVDSS), 1051 to 1070 (SSLSSTSPSSPLPVKVSLKP), 1078 to 1089 (DSSSRGSGRHSS), and 1101 to 1138 (PKSQDSVSSPSPQKQKSASALTYTASSTSAKKASGPAT). Residues 1148–1159 (RTSDHSLSREGS) show a composition bias toward basic and acidic residues. Residues 1160–1181 (RQSLGSDRASATSTSKPNSPRV) show a composition bias toward polar residues. Low complexity predominate over residues 1198 to 1210 (SSSMASLRSPSTS). 2 stretches are compositionally biased toward basic and acidic residues: residues 1215-1225 (LKRDSKSEDKG) and 1234-1243 (RQKETRRSTD). The segment covering 1251–1264 (SKKAGGSSVKSVCK) has biased composition (low complexity). N6-acetyllysine is present on Lys1264. Polar residues-rich tracts occupy residues 1278 to 1290 (PASQQPNANTTGK) and 1341 to 1352 (MQTSARPSQKPQ).

It belongs to the peptidase C19 family. Acetylated at Lys-1264. Acetylation decreases activity. Deacetylated by SIRT1. In terms of tissue distribution, widely expressed.

It catalyses the reaction Thiol-dependent hydrolysis of ester, thioester, amide, peptide and isopeptide bonds formed by the C-terminal Gly of ubiquitin (a 76-residue protein attached to proteins as an intracellular targeting signal).. Functionally, deubiquitinase that recognizes and hydrolyzes the peptide bond at the C-terminal Gly of ubiquitin. May play a role in the regulation of NF-kappa-B signaling pathway by deubiquitinating TRAF2. (Microbial infection) Plays a positive role in foot-and-mouth disease and classical swine fever viral infection. Mechanistically, associates with internal ribosomal entry site (IRES) element within the 5'-untranslated region of viral genomes to promote translation of the virus-encoded polyprotein. This is Ubiquitin carboxyl-terminal hydrolase 31 (USP31) from Homo sapiens (Human).